A 222-amino-acid polypeptide reads, in one-letter code: Phosphoglycolate phosphatase (222 aa).

The active-site Nucleophile is the Asp-8. Positions 8 and 10 each coordinate Mg(2+). Lys-150 provides a ligand contact to substrate. Positions 173 and 177 each coordinate Mg(2+).

This sequence belongs to the archaeal SPP-like hydrolase family. Requires Mg(2+) as cofactor.

It carries out the reaction 2-phosphoglycolate + H2O = glycolate + phosphate. In terms of biological role, catalyzes the dephosphorylation of 2-phosphoglycolate. The sequence is that of Phosphoglycolate phosphatase from Metallosphaera sedula (strain ATCC 51363 / DSM 5348 / JCM 9185 / NBRC 15509 / TH2).